Reading from the N-terminus, the 145-residue chain is Basic phospholipase A2 beta-bungarotoxin A-AL1 chain (145 aa).

Residues 1-17 (MLIFLWCGAVCVSLLGA) form the signal peptide. Residues 18–25 (ANIPPHPL) constitute a propeptide that is removed on maturation. 5 cysteine pairs are disulfide-bonded: Cys52–Cys144, Cys54–Cys70, Cys76–Cys118, Cys86–Cys111, and Cys104–Cys116. Tyr53, Gly55, and Gly57 together coordinate Ca(2+). The active site involves His73. The active site involves Asp119.

It belongs to the phospholipase A2 family. Group I subfamily. G49 sub-subfamily. In terms of assembly, heterodimer; disulfide-linked. The A chains have phospholipase A2 activity and the B chains show homology with the basic protease inhibitors. Ca(2+) is required as a cofactor. Post-translationally, this enzyme lacks one of the seven disulfide bonds found in similar PLA2 proteins. In terms of tissue distribution, expressed by the venom gland.

Its subcellular location is the secreted. It carries out the reaction a 1,2-diacyl-sn-glycero-3-phosphocholine + H2O = a 1-acyl-sn-glycero-3-phosphocholine + a fatty acid + H(+). Snake venom phospholipase A2 (PLA2) that inhibits neuromuscular transmission by blocking acetylcholine release from the nerve termini. PLA2 catalyzes the calcium-dependent hydrolysis of the 2-acyl groups in 3-sn-phosphoglycerides. The sequence is that of Basic phospholipase A2 beta-bungarotoxin A-AL1 chain from Bungarus multicinctus (Many-banded krait).